The chain runs to 255 residues: Acetylglutamate kinase (255 aa).

Substrate is bound by residues 40 to 41, Arg-62, and Asn-157; that span reads GG.

It belongs to the acetylglutamate kinase family. ArgB subfamily.

It is found in the cytoplasm. The catalysed reaction is N-acetyl-L-glutamate + ATP = N-acetyl-L-glutamyl 5-phosphate + ADP. It functions in the pathway amino-acid biosynthesis; L-arginine biosynthesis; N(2)-acetyl-L-ornithine from L-glutamate: step 2/4. Catalyzes the ATP-dependent phosphorylation of N-acetyl-L-glutamate. This is Acetylglutamate kinase from Parabacteroides distasonis (strain ATCC 8503 / DSM 20701 / CIP 104284 / JCM 5825 / NCTC 11152).